A 472-amino-acid polypeptide reads, in one-letter code: Aspartyl/glutamyl-tRNA(Asn/Gln) amidotransferase subunit B (472 aa).

Belongs to the GatB/GatE family. GatB subfamily. As to quaternary structure, heterotrimer of A, B and C subunits.

It carries out the reaction L-glutamyl-tRNA(Gln) + L-glutamine + ATP + H2O = L-glutaminyl-tRNA(Gln) + L-glutamate + ADP + phosphate + H(+). The enzyme catalyses L-aspartyl-tRNA(Asn) + L-glutamine + ATP + H2O = L-asparaginyl-tRNA(Asn) + L-glutamate + ADP + phosphate + 2 H(+). In terms of biological role, allows the formation of correctly charged Asn-tRNA(Asn) or Gln-tRNA(Gln) through the transamidation of misacylated Asp-tRNA(Asn) or Glu-tRNA(Gln) in organisms which lack either or both of asparaginyl-tRNA or glutaminyl-tRNA synthetases. The reaction takes place in the presence of glutamine and ATP through an activated phospho-Asp-tRNA(Asn) or phospho-Glu-tRNA(Gln). This chain is Aspartyl/glutamyl-tRNA(Asn/Gln) amidotransferase subunit B, found in Campylobacter jejuni subsp. jejuni serotype O:2 (strain ATCC 700819 / NCTC 11168).